We begin with the raw amino-acid sequence, 387 residues long: Dual specificity mitogen-activated protein kinase kinase mek-2 (387 aa).

The interval 1 to 37 is disordered; the sequence is MSSGKRRNPLGLSLPPTVNEQSESGEATAEEATATVP. Residues 16–25 are compositionally biased toward polar residues; sequence PTVNEQSESG. Residues 26 to 35 are compositionally biased toward low complexity; it reads EATAEEATAT. Residues 73-360 enclose the Protein kinase domain; it reads LQTEGELGHG…LKSLTADVFF (288 aa). ATP contacts are provided by residues 79 to 87 and lysine 102; that span reads LGHGNGGVV. Aspartate 195 functions as the Proton acceptor in the catalytic mechanism. Phosphoserine is present on residues serine 223 and serine 227.

The protein belongs to the protein kinase superfamily. STE Ser/Thr protein kinase family. MAP kinase kinase subfamily. Interacts with ksr-1.

It carries out the reaction L-seryl-[protein] + ATP = O-phospho-L-seryl-[protein] + ADP + H(+). It catalyses the reaction L-threonyl-[protein] + ATP = O-phospho-L-threonyl-[protein] + ADP + H(+). The catalysed reaction is L-tyrosyl-[protein] + ATP = O-phospho-L-tyrosyl-[protein] + ADP + H(+). With respect to regulation, activated by tyrosine and threonine phosphorylation catalyzed by MAP kinase kinase kinases. Functions in the let-60 Ras signaling pathway; acts downstream of lin-45 raf kinase, but before the sur-1/mpk-1 gene product in controlling vulval cell differentiation. Required for progression of developing oocytes through the pachytene stage. Plays a role in responses to M.nematophilum-mediated bacterial infection by promoting tail swelling and preventing constipation. Involved in fluid homeostasis. Positively regulates lifespan upstream of mpk-1. The sequence is that of Dual specificity mitogen-activated protein kinase kinase mek-2 (mek-2) from Caenorhabditis elegans.